The following is an 87-amino-acid chain: UPF0250 protein NT01EI_2946 (87 aa).

This sequence belongs to the UPF0250 family.

The polypeptide is UPF0250 protein NT01EI_2946 (Edwardsiella ictaluri (strain 93-146)).